A 299-amino-acid polypeptide reads, in one-letter code: Prohibitin-2 (299 aa).

Alanine 2 carries the N-acetylalanine modification. The tract at residues methionine 19–alanine 49 is necessary for transcriptional repression. Tyrosine 128 is subject to Phosphotyrosine. N6-acetyllysine is present on lysine 147. The segment at alanine 150–aspartate 174 is necessary for transcriptional repression. Serine 151 carries the post-translational modification Phosphoserine. A coiled-coil region spans residues serine 190–leucine 238. 4 positions are modified to N6-acetyllysine: lysine 200, lysine 236, lysine 250, and lysine 262.

It belongs to the prohibitin family. The mitochondrial prohibitin complex consists of two subunits (PHB1 and PHB2), assembled into a membrane-associated ring-shaped supercomplex of approximately 1 mDa. Interacts with ESR1, HDAC1 and HDAC5. Interacts with ZNF703. Interacts with STOML2. Interacts with ARFGEF3. Interacts with SPHK2. Interacts with COX4I1; the interaction associates PHB2 with COX. Interacts with MAP1LC3B (membrane-bound form LC3-II); the interaction is direct and upon mitochondrial depolarization and proteasome-dependent outer membrane rupture. Interacts with IGFBP6 (via C-terminal domain). Interacts with CLPB. Interacts with CD86 (via cytoplasmic domain); the interactions increases after priming with CD40. Interacts with AFG3L2. Interacts with DNAJC19. Interacts with AKT2; this interaction may be important for myogenic differentiation. Post-translationally, phosphorylated. Tyrosine phosphorylation is indirectly stimulated by IGFBP6.

It localises to the mitochondrion inner membrane. The protein resides in the cytoplasm. The protein localises to the nucleus. It is found in the cell membrane. In terms of biological role, protein with pleiotropic attributes mediated in a cell-compartment- and tissue-specific manner, which include the plasma membrane-associated cell signaling functions, mitochondrial chaperone, and transcriptional co-regulator of transcription factors and sex steroid hormones in the nucleus. Functionally, in the mitochondria, together with PHB, forms large ring complexes (prohibitin complexes) in the inner mitochondrial membrane (IMM) and functions as a chaperone protein that stabilizes mitochondrial respiratory enzymes and maintains mitochondrial integrity in the IMM, which is required for mitochondrial morphogenesis, neuronal survival, and normal lifespan. The prohibitin complex, with DNAJC19, regulates cardiolipin remodeling and the protein turnover of OMA1 in a cardiolipin-binding manner. Also regulates cytochrome-c oxidase assembly (COX) and mitochondrial respiration. Binding to sphingoid 1-phosphate (SPP) modulates its regulator activity. Has a key role of mitophagy receptor involved in targeting mitochondria for autophagic degradation. Involved in mitochondrial-mediated antiviral innate immunity, activates RIG-I-mediated signal transduction and production of IFNB1 and pro-inflammatory cytokine IL6. In the nucleus, serves as transcriptional co-regulator. Acts as a mediator of transcriptional repression by nuclear hormone receptors via recruitment of histone deacetylases. Functions as an estrogen receptor (ER)-selective coregulator that potentiates the inhibitory activities of antiestrogens and represses the activity of estrogens. Competes with NCOA1 for modulation of ER transcriptional activity. Its function is as follows. In the plasma membrane, is involved in IGFBP6-induced cell migration. Cooperates with CD86 to mediate CD86-signaling in B lymphocytes that regulates the level of IgG1 produced through the activation of distal signaling intermediates. Upon CD40 engagement, required to activate NF-kappa-B signaling pathway via phospholipase C and protein kinase C activation. The sequence is that of Prohibitin-2 from Rattus norvegicus (Rat).